We begin with the raw amino-acid sequence, 158 residues long: Phosphopantetheine adenylyltransferase (158 aa).

Serine 8 is a substrate binding site. ATP is bound by residues serine 8 to phenylalanine 9 and histidine 16. Substrate-binding residues include lysine 40, threonine 72, and arginine 86. ATP contacts are provided by residues glycine 87–arginine 89, glutamate 97, and histidine 122–serine 128.

It belongs to the bacterial CoaD family. As to quaternary structure, homohexamer. The cofactor is Mg(2+).

Its subcellular location is the cytoplasm. The enzyme catalyses (R)-4'-phosphopantetheine + ATP + H(+) = 3'-dephospho-CoA + diphosphate. It functions in the pathway cofactor biosynthesis; coenzyme A biosynthesis; CoA from (R)-pantothenate: step 4/5. Functionally, reversibly transfers an adenylyl group from ATP to 4'-phosphopantetheine, yielding dephospho-CoA (dPCoA) and pyrophosphate. This chain is Phosphopantetheine adenylyltransferase, found in Prochlorococcus marinus (strain NATL1A).